The primary structure comprises 3411 residues: Genome polyprotein (3411 aa).

Over Met1–Asp104 the chain is Cytoplasmic. Residues Pro38–Leu72 are hydrophobic; homodimerization of capsid protein C. Positions Ser102–Gly121 are cleaved as a propeptide — ER anchor for the capsid protein C, removed in mature form by serine protease NS3. The chain crosses the membrane as a helical span at residues Val105–Met125. Over Arg126 to Arg244 the chain is Extracellular. N-linked (GlcNAc...) asparagine; by host glycans are attached at residues Asn134 and Asn150. The chain crosses the membrane as a helical span at residues Trp245–Ser265. At Asn266 to Arg270 the chain is on the cytoplasmic side. Residues Val271–Ser285 form a helical membrane-spanning segment. Residues Ala286–Leu730 are Extracellular-facing. Intrachain disulfides connect Cys288-Cys315, Cys345-Cys401, Cys345-Cys406, Cys359-Cys390, Cys377-Cys401, Cys377-Cys406, Cys467-Cys568, and Cys585-Cys615. The segment at Asp383–Gly396 is fusion peptide. The helical transmembrane segment at Phe731–Phe751 threads the bilayer. Residues Asn752–Thr757 are Cytoplasmic-facing. The helical transmembrane segment at Met758 to Ala778 threads the bilayer. At Asp779 to Glu1132 the chain is on the extracellular side. Cystine bridges form between Cys782–Cys793, Cys833–Cys921, Cys957–Cys1002, Cys1058–Cys1107, Cys1069–Cys1091, and Cys1090–Cys1094. Asn908 and Asn986 each carry an N-linked (GlcNAc...) asparagine; by host glycan. A helical membrane pass occupies residues Ile1133–Lys1153. Topologically, residues Arg1154–Ala1201 are cytoplasmic. The chain crosses the membrane as a helical span at residues Met1202–Leu1222. Residues Arg1223–Pro1287 lie on the Lumenal side of the membrane. Residues Val1288–Val1308 form a helical membrane-spanning segment. The Cytoplasmic segment spans residues Leu1309–Ser1355. Residues Ile1356–Phe1376 form a helical membrane-spanning segment. Residues Gln1377–Glu1378 lie on the Lumenal side of the membrane. Residues Met1379 to Ala1399 form a helical membrane-spanning segment. Residues Gly1400 to Leu1456 are Cytoplasmic-facing. Residues Leu1407–Val1446 form an interacts with and activates NS3 protease region. Residues Ala1457–Phe1477 constitute an intramembrane region (helical). The Cytoplasmic segment spans residues His1478 to Ala2157. The 181-residue stretch at Ser1485–Leu1665 folds into the Peptidase S7 domain. Residues His1537, Asp1561, and Ser1622 each act as charge relay system; for serine protease NS3 activity in the active site. A Helicase ATP-binding domain is found at Pro1669–Gln1825. Residues Lys1673–Lys1676 form an important for RNA-binding region. An ATP-binding site is contributed by Phe1682 to Thr1689. A DEAH box motif is present at residues Asp1773–His1776. The 178-residue stretch at Glu1820–Tyr1997 folds into the Helicase C-terminal domain. Lys1877 is subject to N6-acetyllysine; by host. Positions Ala1942–Tyr1961 are disordered. Residues Met2158–Phe2178 form a helical membrane-spanning segment. Over Met2179–Arg2186 the chain is Lumenal. The segment at residues Met2187–Glu2207 is an intramembrane region (helical). Over Pro2208–Thr2209 the chain is Lumenal. The helical transmembrane segment at His2210 to Gly2230 threads the bilayer. Residues Gln2231 to Ala2241 lie on the Cytoplasmic side of the membrane. The helical transmembrane segment at Phe2242–Ala2256 threads the bilayer. The Lumenal segment spans residues Asn2257–Gly2293. Residues Ala2294–Ile2314 constitute an intramembrane region (helical). At Lys2315–Ile2360 the chain is on the lumenal side. A helical membrane pass occupies residues Thr2361 to Leu2380. The Cytoplasmic portion of the chain corresponds to Pro2381 to Ala2421. The chain crosses the membrane as a helical span at residues Leu2422–Met2442. Residues Cys2443–Thr2445 are Lumenal-facing. A helical membrane pass occupies residues Pro2446 to Gly2466. The Cytoplasmic segment spans residues Asn2467–Ile3411. The mRNA cap 0-1 NS5-type MT domain maps to Gly2507–Ser2771. Ser2562 serves as a coordination point for S-adenosyl-L-methionine. Ser2562 carries the post-translational modification Phosphoserine. Lys2567 acts as the For 2'-O-MTase activity in catalysis. Residues Gly2592, Trp2593, Thr2610, Leu2611, Asp2637, and Val2638 each contribute to the S-adenosyl-L-methionine site. The active-site For 2'-O-MTase activity is Asp2652. Ile2653 lines the S-adenosyl-L-methionine pocket. Active-site for 2'-O-MTase activity residues include Lys2688 and Glu2724. Tyr2726 is a binding site for S-adenosyl-L-methionine. Residues Arg2878–Arg2911 carry the Nuclear localization signal motif. Positions 2945, 2949, 2954, and 2957 each coordinate Zn(2+). One can recognise a RdRp catalytic domain in the interval Gly3035–Ala3187. Zn(2+) contacts are provided by His3222, Cys3238, and Cys3357.

The protein in the N-terminal section; belongs to the class I-like SAM-binding methyltransferase superfamily. mRNA cap 0-1 NS5-type methyltransferase family. As to quaternary structure, homodimer. Interacts (via N-terminus) with host EXOC1 (via C-terminus); this interaction results in EXOC1 degradation through the proteasome degradation pathway. Forms heterodimers with envelope protein E in the endoplasmic reticulum and Golgi. In terms of assembly, homodimer; in the endoplasmic reticulum and Golgi. Interacts with protein prM. Interacts with non-structural protein 1. As to quaternary structure, homodimer; Homohexamer when secreted. Interacts with envelope protein E. Interacts (via N-terminus) with serine protease NS3. In terms of assembly, forms a heterodimer with serine protease NS3. May form homooligomers. As to quaternary structure, forms a heterodimer with NS2B. Interacts with non-structural protein 2A (via N-terminus). Interacts with NS4B. Interacts with unphosphorylated RNA-directed RNA polymerase NS5; this interaction stimulates RNA-directed RNA polymerase NS5 guanylyltransferase activity. NS3 interacts with host PDCD6IP; this interaction contributes to virion release. Interacts with serine protease NS3. In terms of assembly, homodimer. Interacts with host STAT2; this interaction prevents the establishment of cellular antiviral state. Interacts with serine protease NS3. Interacts with host TRIM23; this interaction leads to NS5 ubiquitination. Specific enzymatic cleavages in vivo yield mature proteins. The nascent capsid protein C contains a C-terminal hydrophobic domain that act as a signal sequence for translocation of prM into the lumen of the ER. Mature capsid protein C is cleaved at a site upstream of this hydrophobic domain by NS3. prM is cleaved in post-Golgi vesicles by a host furin, releasing the mature small envelope protein M, and peptide pr. Non-structural protein 2A-alpha, a C-terminally truncated form of non-structural protein 2A, results from partial cleavage by NS3. Specific enzymatic cleavages in vivo yield mature proteins peptide 2K acts as a signal sequence and is removed from the N-terminus of NS4B by the host signal peptidase in the ER lumen. Signal cleavage at the 2K-4B site requires a prior NS3 protease-mediated cleavage at the 4A-2K site. Post-translationally, cleaved in post-Golgi vesicles by a host furin, releasing the mature small envelope protein M, and peptide pr. This cleavage is incomplete as up to 30% of viral particles still carry uncleaved prM. In terms of processing, N-glycosylated. N-glycosylated. The excreted form is glycosylated and this is required for efficient secretion of the protein from infected cells. Post-translationally, polyubiquitinated; ubiquitination is probably mediated by host TRIM23 and is prerequisite for NS5-STAT2 interaction. NS5 is not ISGylated or sumoylated. In terms of processing, acetylated by host KAT5. Acetylation modulates NS3 RNA-binding and unwinding activities and plays an important positive role for viral replication. Phosphorylated on serines residues. This phosphorylation may trigger NS5 nuclear localization.

The protein localises to the virion. It localises to the host nucleus. The protein resides in the host cytoplasm. It is found in the host perinuclear region. Its subcellular location is the secreted. The protein localises to the virion membrane. It localises to the host endoplasmic reticulum membrane. The catalysed reaction is Selective hydrolysis of -Xaa-Xaa-|-Yaa- bonds in which each of the Xaa can be either Arg or Lys and Yaa can be either Ser or Ala.. The enzyme catalyses RNA(n) + a ribonucleoside 5'-triphosphate = RNA(n+1) + diphosphate. It carries out the reaction a ribonucleoside 5'-triphosphate + H2O = a ribonucleoside 5'-diphosphate + phosphate + H(+). It catalyses the reaction ATP + H2O = ADP + phosphate + H(+). The catalysed reaction is a 5'-end (5'-triphosphoguanosine)-ribonucleoside in mRNA + S-adenosyl-L-methionine = a 5'-end (N(7)-methyl 5'-triphosphoguanosine)-ribonucleoside in mRNA + S-adenosyl-L-homocysteine. The enzyme catalyses a 5'-end (N(7)-methyl 5'-triphosphoguanosine)-ribonucleoside in mRNA + S-adenosyl-L-methionine = a 5'-end (N(7)-methyl 5'-triphosphoguanosine)-(2'-O-methyl-ribonucleoside) in mRNA + S-adenosyl-L-homocysteine + H(+). Functionally, plays a role in virus budding by binding to the cell membrane and gathering the viral RNA into a nucleocapsid that forms the core of a mature virus particle. During virus entry, may induce genome penetration into the host cytoplasm after hemifusion induced by the surface proteins. Can migrate to the cell nucleus where it modulates host functions. Its function is as follows. Inhibits RNA silencing by interfering with host Dicer. Prevents premature fusion activity of envelope proteins in trans-Golgi by binding to envelope protein E at pH6.0. After virion release in extracellular space, gets dissociated from E dimers. In terms of biological role, acts as a chaperone for envelope protein E during intracellular virion assembly by masking and inactivating envelope protein E fusion peptide. prM is the only viral peptide matured by host furin in the trans-Golgi network probably to avoid catastrophic activation of the viral fusion activity in acidic Golgi compartment prior to virion release. prM-E cleavage is inefficient, and many virions are only partially matured. These uncleaved prM would play a role in immune evasion. Functionally, may play a role in virus budding. Exerts cytotoxic effects by activating a mitochondrial apoptotic pathway through M ectodomain. May display a viroporin activity. Its function is as follows. Binds to host cell surface receptor and mediates fusion between viral and cellular membranes. Envelope protein is synthesized in the endoplasmic reticulum in the form of heterodimer with protein prM. They play a role in virion budding in the ER, and the newly formed immature particle is covered with 60 spikes composed of heterodimer between precursor prM and envelope protein E. The virion is transported to the Golgi apparatus where the low pH causes dissociation of PrM-E heterodimers and formation of E homodimers. prM-E cleavage is inefficient, and many virions are only partially matured. These uncleaved prM would play a role in immune evasion. Involved in immune evasion, pathogenesis and viral replication. Once cleaved off the polyprotein, is targeted to three destinations: the viral replication cycle, the plasma membrane and the extracellular compartment. Essential for viral replication. Required for formation of the replication complex and recruitment of other non-structural proteins to the ER-derived membrane structures. Excreted as a hexameric lipoparticle that plays a role against host immune response. Antagonizing the complement function. Binds to the host macrophages and dendritic cells. Inhibits signal transduction originating from Toll-like receptor 3 (TLR3). In terms of biological role, component of the viral RNA replication complex that functions in virion assembly and antagonizes the host immune response. Functionally, required cofactor for the serine protease function of NS3. May have membrane-destabilizing activity and form viroporins. Its function is as follows. Displays three enzymatic activities: serine protease, NTPase and RNA helicase. NS3 serine protease, in association with NS2B, performs its autocleavage and cleaves the polyprotein at dibasic sites in the cytoplasm: C-prM, NS2A-NS2B, NS2B-NS3, NS3-NS4A, NS4A-2K and NS4B-NS5. NS3 RNA helicase binds RNA and unwinds dsRNA in the 3' to 5' direction. Also plays a role in virus assembly. Regulates the ATPase activity of the NS3 helicase activity. NS4A allows NS3 helicase to conserve energy during unwinding. In terms of biological role, functions as a signal peptide for NS4B and is required for the interferon antagonism activity of the latter. Functionally, induces the formation of ER-derived membrane vesicles where the viral replication takes place. Inhibits interferon (IFN)-induced host STAT1 phosphorylation and nuclear translocation, thereby preventing the establishment of cellular antiviral state by blocking the IFN-alpha/beta pathway. Its function is as follows. Replicates the viral (+) and (-) RNA genome, and performs the capping of genomes in the cytoplasm. NS5 methylates viral RNA cap at guanine N-7 and ribose 2'-O positions. Besides its role in RNA genome replication, also prevents the establishment of cellular antiviral state by blocking the interferon-alpha/beta (IFN-alpha/beta) signaling pathway. IFN-I induces binding of NS5 to host IFN-activated transcription factor STAT2, preventing its transcriptional activity. Host TRIM23 is the E3 ligase that interacts with and polyubiquitinates NS5 to promote its binding to STAT2 and trigger IFN-I signaling inhibition. The sequence is that of Genome polyprotein from Aedes aegypti (Yellowfever mosquito).